The following is a 134-amino-acid chain: Retinol-binding protein 2 (134 aa).

The all-trans-retinol site is built by Lys41 and Gln109.

The protein belongs to the calycin superfamily. Fatty-acid binding protein (FABP) family.

It localises to the cytoplasm. Intracellular transport of retinol. The sequence is that of Retinol-binding protein 2 (RBP2) from Sus scrofa (Pig).